A 118-amino-acid polypeptide reads, in one-letter code: Immunoglobulin heavy variable 3-9 (118 aa).

The signal sequence occupies residues 1–19 (MELGLSWIFLLAILKGVQC). The interval 20-44 (EVQLVESGGGLVQPGRSLRLSCAAS) is framework-1. In terms of domain architecture, Ig-like spans 20–118 (EVQLVESGGG…DTALYYCAKD (99 aa)). Cys41 and Cys115 form a disulfide bridge. Residues 45–52 (GFTFDDYA) are complementarity-determining-1. The segment at 53–69 (MHWVRQAPGKGLEWVSG) is framework-2. The tract at residues 70–77 (ISWNSGSI) is complementarity-determining-2. The interval 78–115 (GYADSVKGRFTISRDNAKNSLYLQMNSLRAEDTALYYC) is framework-3. The interval 116–118 (AKD) is complementarity-determining-3.

In terms of assembly, immunoglobulins are composed of two identical heavy chains and two identical light chains; disulfide-linked.

It localises to the secreted. It is found in the cell membrane. Functionally, v region of the variable domain of immunoglobulin heavy chains that participates in the antigen recognition. Immunoglobulins, also known as antibodies, are membrane-bound or secreted glycoproteins produced by B lymphocytes. In the recognition phase of humoral immunity, the membrane-bound immunoglobulins serve as receptors which, upon binding of a specific antigen, trigger the clonal expansion and differentiation of B lymphocytes into immunoglobulins-secreting plasma cells. Secreted immunoglobulins mediate the effector phase of humoral immunity, which results in the elimination of bound antigens. The antigen binding site is formed by the variable domain of one heavy chain, together with that of its associated light chain. Thus, each immunoglobulin has two antigen binding sites with remarkable affinity for a particular antigen. The variable domains are assembled by a process called V-(D)-J rearrangement and can then be subjected to somatic hypermutations which, after exposure to antigen and selection, allow affinity maturation for a particular antigen. This is Immunoglobulin heavy variable 3-9 from Homo sapiens (Human).